The sequence spans 522 residues: Glutamate--cysteine ligase (522 aa).

It belongs to the glutamate--cysteine ligase type 1 family. Type 1 subfamily.

The enzyme catalyses L-cysteine + L-glutamate + ATP = gamma-L-glutamyl-L-cysteine + ADP + phosphate + H(+). It functions in the pathway sulfur metabolism; glutathione biosynthesis; glutathione from L-cysteine and L-glutamate: step 1/2. In Shewanella halifaxensis (strain HAW-EB4), this protein is Glutamate--cysteine ligase.